Consider the following 348-residue polypeptide: Oxygen-dependent coproporphyrinogen-III oxidase (348 aa).

Serine 104 contributes to the substrate binding site. A divalent metal cation-binding residues include histidine 108 and histidine 118. Histidine 118 acts as the Proton donor in catalysis. 120–122 (NYR) is a substrate binding site. The a divalent metal cation site is built by histidine 152 and histidine 182. An important for dimerization region spans residues 272–307 (YAEFNLVWDRGTIFGLQTNGRTESILMSLPPLARWE).

The protein belongs to the aerobic coproporphyrinogen-III oxidase family. As to quaternary structure, homodimer. It depends on a divalent metal cation as a cofactor.

It is found in the cytoplasm. The catalysed reaction is coproporphyrinogen III + O2 + 2 H(+) = protoporphyrinogen IX + 2 CO2 + 2 H2O. The protein operates within porphyrin-containing compound metabolism; protoporphyrin-IX biosynthesis; protoporphyrinogen-IX from coproporphyrinogen-III (O2 route): step 1/1. In terms of biological role, involved in the heme and chlorophyll biosynthesis. Catalyzes the aerobic oxidative decarboxylation of propionate groups of rings A and B of coproporphyrinogen-III to yield the vinyl groups in protoporphyrinogen-IX. This Prochlorococcus marinus (strain NATL1A) protein is Oxygen-dependent coproporphyrinogen-III oxidase.